Here is a 314-residue protein sequence, read N- to C-terminus: uncharacterized protein (314 aa).

The segment covering 68-91 (EKKKKSSSFEKRDKRRVQLKEKSP) has biased composition (basic and acidic residues). Disordered stretches follow at residues 68-97 (EKKKKSSSFEKRDKRRVQLKEKSPLRTPRN) and 141-164 (MDVQSPSTMSTSKNNVRNAERPAS). Polar residues predominate over residues 144-157 (QSPSTMSTSKNNVR).

Its subcellular location is the mitochondrion. This is an uncharacterized protein from Schizosaccharomyces pombe (strain 972 / ATCC 24843) (Fission yeast).